The following is a 306-amino-acid chain: D-alanine--D-alanine ligase (306 aa).

Positions 107 to 303 constitute an ATP-grasp domain; the sequence is KHLFKSAGLS…FEQLVVRILE (197 aa). 134–189 is an ATP binding site; it reads IMQQFKKVMVKPSHEGSSIGMAQASTPQELEDALSNAFKFDSQVLVEQWISGREFT. 3 residues coordinate Mg(2+): aspartate 257, glutamate 270, and asparagine 272.

Belongs to the D-alanine--D-alanine ligase family. Requires Mg(2+) as cofactor. Mn(2+) serves as cofactor.

The protein localises to the cytoplasm. It carries out the reaction 2 D-alanine + ATP = D-alanyl-D-alanine + ADP + phosphate + H(+). It participates in cell wall biogenesis; peptidoglycan biosynthesis. Its function is as follows. Cell wall formation. The protein is D-alanine--D-alanine ligase of Pseudoalteromonas translucida (strain TAC 125).